Reading from the N-terminus, the 35-residue chain is SSDYLSFKFDKFAPNQLNMYFQGDASVSTKGVLQL.

The protein belongs to the leguminous lectin family. Homodimer. In terms of processing, highly glycosylated.

Functionally, binds lactose or galactose. The sequence is that of Anti-H(O) lectin 3 from Ulex europaeus (Furze).